The sequence spans 605 residues: Glucose oxidase (605 aa).

A signal peptide spans 1-16 (MQTLLVSSLVVSLAAA). Residues Leu-51 and Thr-52 each contribute to the FAD site. A glycan (N-linked (GlcNAc...) asparagine) is linked at Asn-65. Glu-72 serves as a coordination point for FAD. The N-linked (GlcNAc...) asparagine glycan is linked to Asn-111. FAD-binding residues include Ser-125, Asn-129, Gly-130, and Thr-132. Asn-183 and Asn-190 each carry an N-linked (GlcNAc...) asparagine glycan. Cys-186 and Cys-228 are joined by a disulfide. Residue Val-272 coordinates FAD. N-linked (GlcNAc...) asparagine glycans are attached at residues Asn-280, Asn-377, Asn-410, and Asn-495. The Proton acceptor role is filled by His-538. Residues Arg-559 and Val-560 each contribute to the O2 site. FAD is bound by residues Gly-571 and Met-583.

This sequence belongs to the GMC oxidoreductase family. In terms of assembly, homodimer. Requires FAD as cofactor. The N-linked sugar chains of the glucose oxidase contributed to the high solubility of the enzyme in water.

The protein localises to the secreted. It is found in the cell wall. It localises to the cytoplasm. The protein resides in the extracellular space. Its subcellular location is the extracellular matrix. The catalysed reaction is beta-D-glucose + O2 = D-glucono-1,5-lactone + H2O2. Glucose oxidase catalyzes the oxidation of beta-D-glucose to D-glucono-delta-lactone and hydrogen peroxide in the presence of molecular oxygen. D-glucono-delta-lactone is sequentially hydrolyzed by lactonase to D-gluconic acid, and the resulting hydrogen peroxide is hydrolyzed by catalase to oxygen and water. The activity shows high specificity to beta-D-glucose, with very low to no activity towards L-glucose, 2-deoxy-D-glucose, 3-deoxy-D-glucose, 4-deoxy-D-glucose, 5-deoxy-D-glucose, 6-deoxy-D-glucose, 3-O-methyl-D-glucose, 4-O-methyl-D-glucose, 6-O-methyl-D-glucose, 4,6-O-benzylidene-D-glucose, 5-thio-5-deoxy-D-glucose, D-mannose, D-allose, D-galactose, D-fructose, D-arabinose, D-xylose, trehalose, melibiose, L-mannomethylose, lactose, sucrose or 1,5-anhydro-D-glucitol. This chain is Glucose oxidase, found in Aspergillus niger.